A 199-amino-acid chain; its full sequence is Probable DNA-directed RNA polymerase subunit delta (199 aa).

The 68-residue stretch at 14 to 81 (LSLIEVAHAI…GDNMWGLRAW (68 aa)) folds into the HTH HARE-type domain. Acidic residues-rich tracts occupy residues 116-147 (GDDD…DTDD), 157-171 (AGVD…DETL), and 182-199 (LNDD…DESK). The segment at 116–199 (GDDDDVIDYD…DYDDEDDESK (84 aa)) is disordered.

The protein belongs to the RpoE family. As to quaternary structure, RNAP is composed of a core of 2 alpha, a beta and a beta' subunits. The core is associated with a delta subunit and one of several sigma factors.

Functionally, participates in both the initiation and recycling phases of transcription. In the presence of the delta subunit, RNAP displays an increased specificity of transcription, a decreased affinity for nucleic acids, and an increased efficiency of RNA synthesis because of enhanced recycling. The polypeptide is Probable DNA-directed RNA polymerase subunit delta (Lactiplantibacillus plantarum (strain ATCC BAA-793 / NCIMB 8826 / WCFS1) (Lactobacillus plantarum)).